Consider the following 565-residue polypeptide: DNA-binding protein scr1 (565 aa).

Polar residues predominate over residues 1-19; that stretch reads MSEATTATTTGKPSRSTKN. The interval 1-25 is disordered; sequence MSEATTATTTGKPSRSTKNPDAPRP. C2H2-type zinc fingers lie at residues 26 to 48 and 54 to 78; these read YKCP…IRTH and HVCT…ARIH. 4 disordered regions span residues 79–119, 261–303, 390–434, and 466–565; these read TNAN…VHMT, SNAP…STGS, RPVS…DDPS, and ASTP…MTKP. The segment covering 80-102 has biased composition (low complexity); the sequence is NANSRRNAAAAAAANNSARSSNS. Composition is skewed to polar residues over residues 108–119, 276–286, and 294–303; these read EPSTNNAGVHMT, LPSSSNTSPNH, and GLTSNSSTGS. Positions 391-413 are enriched in low complexity; sequence PVSPCSTAPSSPTFSTRSFSPTP. Polar residues predominate over residues 466–478; the sequence is ASTPASGAVSRTP. Low complexity-rich tracts occupy residues 479–492, 517–526, and 537–555; these read SSVS…VNSS, FSSSSRVSVS, and SSST…PAFS.

Belongs to the creA/MIG C2H2-type zinc-finger protein family.

It is found in the nucleus. Functionally, involved in carbon catabolite repression. Represses the transcription of various genes including the inv1 gene. The protein is DNA-binding protein scr1 (scr1) of Schizosaccharomyces pombe (strain 972 / ATCC 24843) (Fission yeast).